The sequence spans 233 residues: Orotidine 5'-phosphate decarboxylase (233 aa).

Substrate contacts are provided by residues aspartate 11, lysine 34, 61-70 (DLKLHDIPNT), threonine 117, arginine 179, glutamine 188, glycine 208, and arginine 209. Catalysis depends on lysine 63, which acts as the Proton donor.

This sequence belongs to the OMP decarboxylase family. Type 1 subfamily. As to quaternary structure, homodimer.

It carries out the reaction orotidine 5'-phosphate + H(+) = UMP + CO2. It functions in the pathway pyrimidine metabolism; UMP biosynthesis via de novo pathway; UMP from orotate: step 2/2. Catalyzes the decarboxylation of orotidine 5'-monophosphate (OMP) to uridine 5'-monophosphate (UMP). The chain is Orotidine 5'-phosphate decarboxylase from Streptococcus pneumoniae (strain Hungary19A-6).